The following is a 296-amino-acid chain: 4-hydroxy-tetrahydrodipicolinate synthase (296 aa).

T49 is a binding site for pyruvate. The active-site Proton donor/acceptor is Y137. K166 acts as the Schiff-base intermediate with substrate in catalysis. Residue I208 coordinates pyruvate.

This sequence belongs to the DapA family. In terms of assembly, homotetramer; dimer of dimers.

It is found in the cytoplasm. The catalysed reaction is L-aspartate 4-semialdehyde + pyruvate = (2S,4S)-4-hydroxy-2,3,4,5-tetrahydrodipicolinate + H2O + H(+). Its pathway is amino-acid biosynthesis; L-lysine biosynthesis via DAP pathway; (S)-tetrahydrodipicolinate from L-aspartate: step 3/4. In terms of biological role, catalyzes the condensation of (S)-aspartate-beta-semialdehyde [(S)-ASA] and pyruvate to 4-hydroxy-tetrahydrodipicolinate (HTPA). The sequence is that of 4-hydroxy-tetrahydrodipicolinate synthase from Pelodictyon phaeoclathratiforme (strain DSM 5477 / BU-1).